The primary structure comprises 96 residues: Co-chaperonin GroES (96 aa).

This sequence belongs to the GroES chaperonin family. In terms of assembly, heptamer of 7 subunits arranged in a ring. Interacts with the chaperonin GroEL.

Its subcellular location is the cytoplasm. In terms of biological role, together with the chaperonin GroEL, plays an essential role in assisting protein folding. The GroEL-GroES system forms a nano-cage that allows encapsulation of the non-native substrate proteins and provides a physical environment optimized to promote and accelerate protein folding. GroES binds to the apical surface of the GroEL ring, thereby capping the opening of the GroEL channel. This chain is Co-chaperonin GroES, found in Aggregatibacter actinomycetemcomitans (Actinobacillus actinomycetemcomitans).